A 397-amino-acid polypeptide reads, in one-letter code: 2-aminoadipate transaminase (397 aa).

G40 contributes to the substrate binding site. Residues Y70, 100 to 101, N174, 202 to 205, 235 to 237, and R245 contribute to the pyridoxal 5'-phosphate site; these read SQ, DDAY, and SFS. N174 serves as a coordination point for substrate. K263 is subject to N6-(pyridoxal phosphate)lysine. Residue R368 participates in substrate binding.

Belongs to the class-I pyridoxal-phosphate-dependent aminotransferase family. Homodimer. The cofactor is pyridoxal 5'-phosphate.

The catalysed reaction is L-2-aminoadipate + 2-oxoglutarate = 2-oxoadipate + L-glutamate. Its pathway is amino-acid biosynthesis; L-lysine biosynthesis via AAA pathway; L-alpha-aminoadipate from 2-oxoglutarate: step 5/5. Catalyzes the transfer of an amino group between 2-oxoadipate (2-OA) and glutamate (Glu) to yield alpha-aminodipate (AAA). It can also transaminate glutamate, leucine, and aromatic amino acids. It also contributes in the biosynthesis of other amino acids such as leucine. This Thermus thermophilus (strain ATCC BAA-163 / DSM 7039 / HB27) protein is 2-aminoadipate transaminase (lysN).